The primary structure comprises 361 residues: Phenylalanine--tRNA ligase alpha subunit (361 aa).

Glu-260 serves as a coordination point for Mg(2+).

This sequence belongs to the class-II aminoacyl-tRNA synthetase family. Phe-tRNA synthetase alpha subunit type 1 subfamily. In terms of assembly, tetramer of two alpha and two beta subunits. Requires Mg(2+) as cofactor.

It is found in the cytoplasm. It catalyses the reaction tRNA(Phe) + L-phenylalanine + ATP = L-phenylalanyl-tRNA(Phe) + AMP + diphosphate + H(+). This chain is Phenylalanine--tRNA ligase alpha subunit, found in Bartonella quintana (strain Toulouse) (Rochalimaea quintana).